A 212-amino-acid polypeptide reads, in one-letter code: Uracil phosphoribosyltransferase (212 aa).

5-phospho-alpha-D-ribose 1-diphosphate-binding positions include Arg78, Arg103, and 130–138 (DPMLATGSS). Residues Ile193 and 198–200 (GDA) each bind uracil. Asp199 lines the 5-phospho-alpha-D-ribose 1-diphosphate pocket.

The protein belongs to the UPRTase family. Mg(2+) is required as a cofactor.

The catalysed reaction is UMP + diphosphate = 5-phospho-alpha-D-ribose 1-diphosphate + uracil. Its pathway is pyrimidine metabolism; UMP biosynthesis via salvage pathway; UMP from uracil: step 1/1. Its activity is regulated as follows. Allosterically activated by GTP. Its function is as follows. Catalyzes the conversion of uracil and 5-phospho-alpha-D-ribose 1-diphosphate (PRPP) to UMP and diphosphate. This Pseudomonas savastanoi pv. phaseolicola (strain 1448A / Race 6) (Pseudomonas syringae pv. phaseolicola (strain 1448A / Race 6)) protein is Uracil phosphoribosyltransferase.